A 517-amino-acid polypeptide reads, in one-letter code: Crotonobetaine/carnitine--CoA ligase (517 aa).

The protein belongs to the ATP-dependent AMP-binding enzyme family.

The enzyme catalyses 4-(trimethylamino)butanoate + ATP + CoA = 4-(trimethylamino)butanoyl-CoA + AMP + diphosphate. The catalysed reaction is crotonobetaine + ATP + CoA = crotonobetainyl-CoA + AMP + diphosphate. It carries out the reaction (R)-carnitine + ATP + CoA = (R)-carnitinyl-CoA + AMP + diphosphate. It participates in amine and polyamine metabolism; carnitine metabolism. In terms of biological role, catalyzes the transfer of CoA to carnitine, generating the initial carnitinyl-CoA needed for the CaiB reaction cycle. Also has activity toward crotonobetaine and gamma-butyrobetaine. This chain is Crotonobetaine/carnitine--CoA ligase, found in Escherichia coli O127:H6 (strain E2348/69 / EPEC).